Here is a 211-residue protein sequence, read N- to C-terminus: Vascular-related unknown protein 1 (211 aa).

The span at 1-12 (MMDTFSCNSYEQ) shows a compositional bias: polar residues. Positions 1 to 40 (MMDTFSCNSYEQNHPHDDDIDIDAHDHDSHGGDHQEESGW) are disordered. A compositionally biased stretch (basic and acidic residues) spans 13–37 (NHPHDDDIDIDAHDHDSHGGDHQEE).

Expressed in vascular tissues of cotyledons, rosette leaves, sepals, petals, anther filaments. Expressed in roots, inflorescence stems and developing seeds.

The protein resides in the cytoplasm. It localises to the nucleus. In terms of biological role, involved in the regulation of xylem development and growth. May regulate secondary wall formation during vascular development by modulation of brassinosteroid, gibberellin and auxin hormone signaling pathways. The sequence is that of Vascular-related unknown protein 1 from Arabidopsis thaliana (Mouse-ear cress).